Here is a 573-residue protein sequence, read N- to C-terminus: Arylsulfatase I (573 aa).

The N-terminal stretch at 1–23 (MHALSGFSLVSLLSLGYLSWDWA) is a signal peptide. Residues Asp55, Asp56, and Cys93 each coordinate Ca(2+). The active-site Nucleophile is the Cys93. Cys93 is subject to 3-oxoalanine (Cys). Position 147 (Lys147) interacts with substrate. Residue His149 is part of the active site. Position 239 (His239) interacts with substrate. Residues Asn276 and Asn288 are each glycosylated (N-linked (GlcNAc...) asparagine). Ca(2+) contacts are provided by Asp297 and Asn298. Lys315 serves as a coordination point for substrate. Residues Asn466 and Asn496 are each glycosylated (N-linked (GlcNAc...) asparagine). The disordered stretch occupies residues 506 to 550 (AANPRAHPDFNGGAWGPWASDEDEEEEDEEEEGRARSFPRGRRKK). Positions 525–537 (SDEDEEEEDEEEE) are enriched in acidic residues.

Belongs to the sulfatase family. It depends on Ca(2+) as a cofactor. The oxidation of Cys-93 residue to 3-oxoalanine (also known as C(alpha)-formylglycine) by SUMF1/Sulfatase-modifying factor 1, seems critical for catalytic activity.

Its subcellular location is the secreted. The protein resides in the endoplasmic reticulum. Functionally, displays arylsulfatase activity at neutral pH, when co-expressed with SUMF1; arylsulfatase activity is measured in the secretion medium of retinal cell line, but no activity is recorded when measured in cell extracts. This Rattus norvegicus (Rat) protein is Arylsulfatase I (Arsi).